Reading from the N-terminus, the 92-residue chain is Large ribosomal subunit protein eL43 (92 aa).

A C4-type zinc finger spans residues 39-60; it reads CEFCGKFAVKRKAVGIWGCKDC.

It belongs to the eukaryotic ribosomal protein eL43 family.

This chain is Large ribosomal subunit protein eL43 (RPL37A), found in Pseudotsuga menziesii (Douglas-fir).